The sequence spans 204 residues: MTDNLQLTHLVDACRWIGAKGWAPATGGNMSIRQNDAFCWLSESGKDKGSLTIDDFLQVDIASNRAPSGRKPSAETGLHTLIYRLFPEANAVLHVHTVNATVLSRLVKETELRISGFEMQKSLTGQSTHLDTVTIPVFDNDQDIDALASRIAHYAQERPFNYGFLLRGHGLTCWGRDVAEARRHLEGLEFLFECEMRLRQLEKI.

Zn(2+)-binding residues include His-94 and His-96.

The protein belongs to the aldolase class II family. MtnB subfamily. The cofactor is Zn(2+).

The catalysed reaction is 5-(methylsulfanyl)-D-ribulose 1-phosphate = 5-methylsulfanyl-2,3-dioxopentyl phosphate + H2O. It participates in amino-acid biosynthesis; L-methionine biosynthesis via salvage pathway; L-methionine from S-methyl-5-thio-alpha-D-ribose 1-phosphate: step 2/6. In terms of biological role, catalyzes the dehydration of methylthioribulose-1-phosphate (MTRu-1-P) into 2,3-diketo-5-methylthiopentyl-1-phosphate (DK-MTP-1-P). In Enterobacter sp. (strain 638), this protein is Methylthioribulose-1-phosphate dehydratase.